The sequence spans 513 residues: Histidine ammonia-lyase (513 aa).

A cross-link (5-imidazolinone (Ala-Gly)) is located at residues 142 to 144 (ASG). At serine 143 the chain carries 2,3-didehydroalanine (Ser).

The protein belongs to the PAL/histidase family. In terms of processing, contains an active site 4-methylidene-imidazol-5-one (MIO), which is formed autocatalytically by cyclization and dehydration of residues Ala-Ser-Gly.

It localises to the cytoplasm. It carries out the reaction L-histidine = trans-urocanate + NH4(+). Its pathway is amino-acid degradation; L-histidine degradation into L-glutamate; N-formimidoyl-L-glutamate from L-histidine: step 1/3. The polypeptide is Histidine ammonia-lyase (Methylobacterium sp. (strain 4-46)).